A 298-amino-acid polypeptide reads, in one-letter code: Ribosomal RNA small subunit methyltransferase H (298 aa).

S-adenosyl-L-methionine is bound by residues 35–37 (GGH), D55, F82, D100, and Q107.

This sequence belongs to the methyltransferase superfamily. RsmH family.

It localises to the cytoplasm. The catalysed reaction is cytidine(1402) in 16S rRNA + S-adenosyl-L-methionine = N(4)-methylcytidine(1402) in 16S rRNA + S-adenosyl-L-homocysteine + H(+). Functionally, specifically methylates the N4 position of cytidine in position 1402 (C1402) of 16S rRNA. In Chlamydia abortus (strain DSM 27085 / S26/3) (Chlamydophila abortus), this protein is Ribosomal RNA small subunit methyltransferase H.